The following is a 608-amino-acid chain: Phosphogluconate dehydratase (608 aa).

[4Fe-4S] cluster-binding residues include C154 and C221.

This sequence belongs to the IlvD/Edd family. [4Fe-4S] cluster is required as a cofactor.

It catalyses the reaction 6-phospho-D-gluconate = 2-dehydro-3-deoxy-6-phospho-D-gluconate + H2O. Its pathway is carbohydrate metabolism; Entner-Doudoroff pathway. Catalyzes the dehydration of 6-phospho-D-gluconate to 2-dehydro-3-deoxy-6-phospho-D-gluconate. The chain is Phosphogluconate dehydratase from Helicobacter pylori (strain J99 / ATCC 700824) (Campylobacter pylori J99).